The sequence spans 363 residues: Chorismate synthase (363 aa).

Position 48 (Arg48) interacts with NADP(+). FMN is bound by residues 125–127 (RSS), 238–239 (NA), Gly278, 293–297 (KPTAS), and Arg319.

The protein belongs to the chorismate synthase family. In terms of assembly, homotetramer. The cofactor is FMNH2.

It carries out the reaction 5-O-(1-carboxyvinyl)-3-phosphoshikimate = chorismate + phosphate. It participates in metabolic intermediate biosynthesis; chorismate biosynthesis; chorismate from D-erythrose 4-phosphate and phosphoenolpyruvate: step 7/7. Catalyzes the anti-1,4-elimination of the C-3 phosphate and the C-6 proR hydrogen from 5-enolpyruvylshikimate-3-phosphate (EPSP) to yield chorismate, which is the branch point compound that serves as the starting substrate for the three terminal pathways of aromatic amino acid biosynthesis. This reaction introduces a second double bond into the aromatic ring system. The chain is Chorismate synthase from Acinetobacter baumannii (strain AB0057).